Consider the following 473-residue polypeptide: Psoralen synthase (473 aa).

The chain crosses the membrane as a helical span at residues tyrosine 1 to valine 17. A substrate specificity region spans residues threonine 350 to valine 355. Cysteine 425 contributes to the heme binding site.

Belongs to the cytochrome P450 family. Heme is required as a cofactor.

The protein localises to the microsome membrane. The enzyme catalyses (7S)-marmesin + reduced [NADPH--hemoprotein reductase] + O2 = psoralen + acetone + oxidized [NADPH--hemoprotein reductase] + 2 H2O + H(+). It functions in the pathway secondary metabolite biosynthesis. In terms of biological role, involved in the biosynthesis of coumarins and furanocoumarins (FCs), natural products required for defense responses against attacks by predators with potential medical and agroindustrial usages such as anticoagulant, rodenticide and artificial vanilla substitutes. Involved in linear furanocumarin (psoralen) biosynthesis. Converts marmesin to psoralen and, with much lower affinity, 5-hydroxymarmesin to bergaptol. This Pastinaca sativa (Wild parsnip) protein is Psoralen synthase.